A 242-amino-acid polypeptide reads, in one-letter code: Probable transcriptional regulatory protein PG_0097 (242 aa).

This sequence belongs to the TACO1 family.

The protein localises to the cytoplasm. The sequence is that of Probable transcriptional regulatory protein PG_0097 from Porphyromonas gingivalis (strain ATCC BAA-308 / W83).